We begin with the raw amino-acid sequence, 126 residues long: Holo-[acyl-carrier-protein] synthase (126 aa).

2 residues coordinate Mg(2+): Asp-9 and Glu-58.

Belongs to the P-Pant transferase superfamily. AcpS family. The cofactor is Mg(2+).

The protein resides in the cytoplasm. The enzyme catalyses apo-[ACP] + CoA = holo-[ACP] + adenosine 3',5'-bisphosphate + H(+). Its function is as follows. Transfers the 4'-phosphopantetheine moiety from coenzyme A to a Ser of acyl-carrier-protein. The sequence is that of Holo-[acyl-carrier-protein] synthase from Vibrio campbellii (strain ATCC BAA-1116).